Here is a 95-residue protein sequence, read N- to C-terminus: Aspartyl/glutamyl-tRNA(Asn/Gln) amidotransferase subunit C (95 aa).

Belongs to the GatC family. Heterotrimer of A, B and C subunits.

The catalysed reaction is L-glutamyl-tRNA(Gln) + L-glutamine + ATP + H2O = L-glutaminyl-tRNA(Gln) + L-glutamate + ADP + phosphate + H(+). It carries out the reaction L-aspartyl-tRNA(Asn) + L-glutamine + ATP + H2O = L-asparaginyl-tRNA(Asn) + L-glutamate + ADP + phosphate + 2 H(+). Functionally, allows the formation of correctly charged Asn-tRNA(Asn) or Gln-tRNA(Gln) through the transamidation of misacylated Asp-tRNA(Asn) or Glu-tRNA(Gln) in organisms which lack either or both of asparaginyl-tRNA or glutaminyl-tRNA synthetases. The reaction takes place in the presence of glutamine and ATP through an activated phospho-Asp-tRNA(Asn) or phospho-Glu-tRNA(Gln). The sequence is that of Aspartyl/glutamyl-tRNA(Asn/Gln) amidotransferase subunit C from Methylorubrum populi (strain ATCC BAA-705 / NCIMB 13946 / BJ001) (Methylobacterium populi).